The sequence spans 148 residues: Hemoglobin subunit beta (148 aa).

The Globin domain occupies 3-148; sequence DWTDAERSAI…VVSALGRQYH (146 aa). Heme b is bound by residues His-64 and His-93.

It belongs to the globin family. Heterotetramer of two alpha chains and two beta chains. Red blood cells.

Its function is as follows. Involved in oxygen transport from gills to the various peripheral tissues. This Salmo salar (Atlantic salmon) protein is Hemoglobin subunit beta (hbb).